Consider the following 636-residue polypeptide: Asparagine synthetase domain-containing protein 1 (636 aa).

C2 serves as the catalytic Nucleophile. The 186-residue stretch at 2 to 187 folds into the Glutamine amidotransferase type-2 domain; sequence CGICCVVALS…ASGIFKMDLR (186 aa). In terms of domain architecture, Asparagine synthetase spans 291 to 607; the sequence is QFIDVLDEAV…GLEAASILPK (317 aa).

The chain is Asparagine synthetase domain-containing protein 1 (ASNSD1) from Gallus gallus (Chicken).